Reading from the N-terminus, the 261-residue chain is Lytic polysaccharide monooxygenase-like protein X325 (261 aa).

A signal peptide spans Met-1–Ala-17. Cu(2+)-binding residues include His-18, His-64, and Asp-133. Disulfide bonds link Cys-39–Cys-139 and Cys-108–Cys-155. Asn-157 and Asn-183 each carry an N-linked (GlcNAc...) asparagine glycan. The disordered stretch occupies residues Leu-174–Ser-210. Residues Gly-180 to Ser-210 show a composition bias toward low complexity. Asn-238 is lipidated: GPI-anchor amidated asparagine. The propeptide at Ser-239–Ile-261 is removed in mature form.

Belongs to the X325 family. Cu(2+) serves as cofactor.

It is found in the cell membrane. Functionally, lytic polysaccharide monooxygenase-like protein that has diverged to biological functions other than polysaccharide degradation since it does not perform oxidative cleavage of polysaccharides. Acts as a cell surface-bound protein that functions in the copper-accumulation pathway. The polypeptide is Lytic polysaccharide monooxygenase-like protein X325 (Yarrowia lipolytica (strain CLIB 122 / E 150) (Yeast)).